The primary structure comprises 341 residues: Cell division protein FtsX (341 aa).

The disordered stretch occupies residues 1 to 34 (MSTTRTPKVSERVAPKPADPQPAKKKRGEDDDGP). The Cytoplasmic segment spans residues 1-65 (MSTTRTPKVS…RRLGKQPIGS (65 aa)). A helical membrane pass occupies residues 66–86 (FFTCLVMAVALSMPMGLSLLL). The Periplasmic portion of the chain corresponds to 87 to 212 (KNIEQLGGSW…LAAILKLGDR (126 aa)). The helical transmembrane segment at 213-233 (FVFGLAVMLISALLLVIGNTI) threads the bilayer. The Cytoplasmic portion of the chain corresponds to 234-263 (RLHIENRRIEIEVIKLVGGTDAYVRRPFLY). The helical transmembrane segment at 264 to 284 (MGALYGLGAGLLAWGILAFGL) threads the bilayer. Residues 285-311 (NWLNEAVVGLSGLYGSDFALGGVPASD) lie on the Periplasmic side of the membrane. A helical transmembrane segment spans residues 312-332 (GLSLLIGAVLLGYIGAWIAVA). Residues 333–341 (RHLNELAPR) lie on the Cytoplasmic side of the membrane.

The protein belongs to the ABC-4 integral membrane protein family. FtsX subfamily. In terms of assembly, forms a membrane-associated complex with FtsE.

It is found in the cell inner membrane. In terms of biological role, part of the ABC transporter FtsEX involved in cellular division. This is Cell division protein FtsX from Pseudomonas putida (Arthrobacter siderocapsulatus).